The primary structure comprises 526 residues: Microphthalmia-associated transcription factor (526 aa).

Ser-5 bears the Phosphoserine; by MTOR mark. Disordered regions lie at residues 20–54 (EPKTYYELKSQPLKSSSSAEHSGASKPPLSSSTMT) and 155–179 (VLSSPCPNQPGDHAMPPVPGSSAPN). The span at 34 to 44 (SSSSAEHSGAS) shows a compositional bias: low complexity. At Ser-180 the chain carries Phosphoserine; by MAPK. Positions 224-291 (DDVIDDIISL…PANLPNIKRE (68 aa)) are transactivation. Ser-280 is modified (phosphoserine). Residue Lys-289 forms a Glycyl lysine isopeptide (Lys-Gly) (interchain with G-Cter in SUMO) linkage. The 54-residue stretch at 311–364 (QKKDNHNLIERRRRFNINDRIKELGTLIPKSNDPDMRWNKGTILKASVDYIRKL) folds into the bHLH domain. Residues 355 to 401 (KASVDYIRKLQREQQRAKDLENRQKKLEHANRHLLLRVQELEMQARA) are a coiled coil. The interval 374–395 (LENRQKKLEHANRHLLLRVQEL) is leucine-zipper. The interval 401 to 431 (AHGLSLIPSTGLCSPDLVNRIIKQEPVLENC) is DNA-binding regulation. Ser-405 bears the Phosphoserine; by GSK3 mark. Ser-414 carries the post-translational modification Phosphoserine. Lys-423 participates in a covalent cross-link: Glycyl lysine isopeptide (Lys-Gly) (interchain with G-Cter in SUMO). Ser-491 carries the phosphoserine modification. Residues 496–526 (TDPLLSSVSPGASKTSSRRSSMSAEETEHAC) are disordered. A compositionally biased stretch (low complexity) spans 507 to 519 (ASKTSSRRSSMSA). Ser-516 bears the Phosphoserine; by RPS6KA1 mark.

The protein belongs to the MiT/TFE family. As to quaternary structure, homodimer or heterodimer; dimerization is mediated via the coiled coil region. Efficient DNA binding requires dimerization with another bHLH protein. Binds DNA in the form of homodimer or heterodimer with either TFE3, TFEB or TFEC. Interacts with small GTPases Rag (RagA/RRAGA, RagB/RRAGB, RagC/RRAGC and/or RagD/RRAGD); promoting its recruitment to lysosomal membrane in the presence of nutrients. Interacts with KARS1. Identified in a complex with HINT1 and CTNNB1. Interacts with VSX2. When nutrients are present, phosphorylation by MTOR at Ser-5 via non-canonical mTORC1 pathway promotes ubiquitination by the SCF(BTRC) complex, followed by degradation. Phosphorylation at Ser-405 significantly enhances the ability to bind the tyrosinase promoter. Phosphorylation by MARK3/cTAK1 at Ser-280 promotes association with 14-3-3/YWHA adapters and retention in the cytosol. Phosphorylated at Ser-180 and Ser-516 following KIT signaling, triggering a short live activation: Phosphorylation at Ser-180 and Ser-516 by MAPK and RPS6KA1, respectively, activate the transcription factor activity but also promote ubiquitination and subsequent degradation by the proteasome. Phosphorylated in response to blue light (415nm). In terms of processing, ubiquitinated by the SCF(BTRC) and SCF(FBXW11) complexes following phosphorylation ar Ser-5 by MTOR, leading to its degradation by the proteasome. Ubiquitinated following phosphorylation at Ser-180, leading to subsequent degradation by the proteasome. Deubiquitinated by USP13, preventing its degradation. In the adult, expressed at high levels in the heart, skin, skeletal muscle, intestine, stomach, kidney, ovary, lung, spleen and brain. In the embryo, expressed in developing eye, ear, skin and heart. Isoform M is expressed in melanocytes and also in the embryonic and adult heart while isoform A and isoform H are more widely expressed.

Its subcellular location is the nucleus. It is found in the cytoplasm. It localises to the lysosome membrane. Transcription factor that acts as a master regulator of melanocyte survival and differentiation as well as melanosome biogenesis. Binds to M-boxes (5'-TCATGTG-3') and symmetrical DNA sequences (E-boxes) (5'-CACGTG-3') found in the promoter of pigmentation genes, such as tyrosinase (TYR). Involved in the cellular response to amino acid availability by acting downstream of MTOR: in the presence of nutrients, MITF phosphorylation by MTOR promotes its inactivation. Upon starvation or lysosomal stress, inhibition of MTOR induces MITF dephosphorylation, resulting in transcription factor activity. Plays an important role in melanocyte development by regulating the expression of tyrosinase (TYR) and tyrosinase-related protein 1 (TYRP1). Plays a critical role in the differentiation of various cell types, such as neural crest-derived melanocytes, mast cells, osteoclasts and optic cup-derived retinal pigment epithelium. The sequence is that of Microphthalmia-associated transcription factor (Mitf) from Mus musculus (Mouse).